A 453-amino-acid polypeptide reads, in one-letter code: Tryptophan biosynthesis protein TrpCF (453 aa).

The tract at residues 1–257 (MMQTVLAKIV…AAVRRVLLGE (257 aa)) is indole-3-glycerol phosphate synthase. The interval 258–453 (NKVCGLTRGQ…ASVFQTLRAY (196 aa)) is N-(5'-phosphoribosyl)anthranilate isomerase.

The protein in the N-terminal section; belongs to the TrpC family. In the C-terminal section; belongs to the TrpF family. As to quaternary structure, monomer.

The enzyme catalyses N-(5-phospho-beta-D-ribosyl)anthranilate = 1-(2-carboxyphenylamino)-1-deoxy-D-ribulose 5-phosphate. It catalyses the reaction 1-(2-carboxyphenylamino)-1-deoxy-D-ribulose 5-phosphate + H(+) = (1S,2R)-1-C-(indol-3-yl)glycerol 3-phosphate + CO2 + H2O. It participates in amino-acid biosynthesis; L-tryptophan biosynthesis; L-tryptophan from chorismate: step 3/5. Its pathway is amino-acid biosynthesis; L-tryptophan biosynthesis; L-tryptophan from chorismate: step 4/5. Its function is as follows. Bifunctional enzyme that catalyzes two sequential steps of tryptophan biosynthetic pathway. The first reaction is catalyzed by the isomerase, coded by the TrpF domain; the second reaction is catalyzed by the synthase, coded by the TrpC domain. This is Tryptophan biosynthesis protein TrpCF (trpC) from Escherichia coli O157:H7.